Consider the following 88-residue polypeptide: RNA-binding protein Hfq (88 aa).

In terms of domain architecture, Sm spans 9-68 (DPFLNALRCERIPVSIYLVNGIKLQGQIESFDQFVILLKNTVNQMVYKHAISTVVPARAV). The segment at 66-88 (RAVSHHTASDRPQGERPQETTEE) is disordered. Positions 72 to 88 (TASDRPQGERPQETTEE) are enriched in basic and acidic residues.

It belongs to the Hfq family. As to quaternary structure, homohexamer.

Functionally, RNA chaperone that binds small regulatory RNA (sRNAs) and mRNAs to facilitate mRNA translational regulation in response to envelope stress, environmental stress and changes in metabolite concentrations. Also binds with high specificity to tRNAs. This is RNA-binding protein Hfq from Aliivibrio salmonicida (strain LFI1238) (Vibrio salmonicida (strain LFI1238)).